A 360-amino-acid chain; its full sequence is Actin-like protein MamK (360 aa).

Residues Lys22, Thr33 to Ser34, and Asp89 each bind ATP. Residue Glu156 coordinates Mg(2+). Residues Ala177–Thr179, Lys231–Ser235, and Gly302 contribute to the ATP site.

Belongs to the FtsA/MreB family. MamK subfamily. In terms of assembly, forms cytoplasmic filaments. Interacts with MamJ. Forms filaments in the absence of other magnetosome proteins and in E.coli. Filament formation in vitro requires ATP, GTP or a non-hydrolyzable ATP analog.

It localises to the cytoplasm. The protein localises to the cytoskeleton. The enzyme catalyses ATP + H2O = ADP + phosphate + H(+). With respect to regulation, filament dynamics depend partially on MamJ. In terms of biological role, protein with ATPase activity which forms dynamic cytoplasmic filaments that are involved in sorting, concatenating and/or correctly positioning of magnetosomes in the cell. Not absolutely necessary for assembly of short chains. Filaments grow from the both cell poles towards midcell, and are probably disassembled at the other end of the cell, a process known as treadmilling. Polymerizes in the presence of ATP, GTP or a non-hydrolyzable ATP analog. Required for correct segregation and positioning of magnetosomes following cell division. This Magnetospirillum gryphiswaldense (strain DSM 6361 / JCM 21280 / NBRC 15271 / MSR-1) protein is Actin-like protein MamK.